The primary structure comprises 156 residues: ATP synthase subunit b (156 aa).

A helical membrane pass occupies residues 3-23; that stretch reads INFTLLAQALAFAGLIWIIAT.

This sequence belongs to the ATPase B chain family. In terms of assembly, F-type ATPases have 2 components, F(1) - the catalytic core - and F(0) - the membrane proton channel. F(1) has five subunits: alpha(3), beta(3), gamma(1), delta(1), epsilon(1). F(0) has three main subunits: a(1), b(2) and c(10-14). The alpha and beta chains form an alternating ring which encloses part of the gamma chain. F(1) is attached to F(0) by a central stalk formed by the gamma and epsilon chains, while a peripheral stalk is formed by the delta and b chains.

The protein resides in the cell membrane. F(1)F(0) ATP synthase produces ATP from ADP in the presence of a proton or sodium gradient. F-type ATPases consist of two structural domains, F(1) containing the extramembraneous catalytic core and F(0) containing the membrane proton channel, linked together by a central stalk and a peripheral stalk. During catalysis, ATP synthesis in the catalytic domain of F(1) is coupled via a rotary mechanism of the central stalk subunits to proton translocation. In terms of biological role, component of the F(0) channel, it forms part of the peripheral stalk, linking F(1) to F(0). This chain is ATP synthase subunit b, found in Stenotrophomonas maltophilia (strain K279a).